Here is a 486-residue protein sequence, read N- to C-terminus: Zinc finger chaperone ZPR1 (486 aa).

Residues 1 to 31 (MSEQKEDLFKPVGEAAAEVEDESIAEQNKAN) form a disordered region. S23 is subject to Phosphoserine. 2 consecutive C4-type zinc fingers follow at residues 54-86 (CMNC…CPHC) and 295-327 (CPSC…CDHC). T407 carries the phosphothreonine modification.

The protein belongs to the ZPR1 family. Interacts with elongation factor 1-alpha.

Its subcellular location is the cytoplasm. The protein localises to the nucleus. Functionally, acts as a protein folding chaperone for elongation factor 1-alpha. This Saccharomyces cerevisiae (strain ATCC 204508 / S288c) (Baker's yeast) protein is Zinc finger chaperone ZPR1.